We begin with the raw amino-acid sequence, 147 residues long: Ubiquitin-conjugating enzyme E2 D2B (147 aa).

A UBC core domain is found at 1-147; the sequence is MALKRIHKEL…AREWTQKYAM (147 aa). The active-site Glycyl thioester intermediate is C85.

This sequence belongs to the ubiquitin-conjugating enzyme family. In terms of assembly, interacts with CNOT4 (via RING domain). As to expression, testis-specific. Mainly expressed in the round spermatids (at protein level).

The catalysed reaction is S-ubiquitinyl-[E1 ubiquitin-activating enzyme]-L-cysteine + [E2 ubiquitin-conjugating enzyme]-L-cysteine = [E1 ubiquitin-activating enzyme]-L-cysteine + S-ubiquitinyl-[E2 ubiquitin-conjugating enzyme]-L-cysteine.. The protein operates within protein modification; protein ubiquitination. Its function is as follows. Catalyzes the covalent attachment of ubiquitin to other proteins. Mediates the selective degradation of short-lived and abnormal proteins. Functions in the E6/E6-AP-induced ubiquitination of p53/TP53. Mediates ubiquitination of PEX5 and SQSTM1 and autoubiquitination of STUB1 and TRAF6. Involved in the signal-induced conjugation and subsequent degradation of NFKBIA, FBXW2-mediated GCM1 ubiquitination and degradation, MDM2-dependent degradation of p53/TP53 and the activation of MAVS in the mitochondria by RIGI in response to viral infection Plays a role in early maturation of the testis. This is Ubiquitin-conjugating enzyme E2 D2B (Ube2d2b) from Rattus norvegicus (Rat).